A 517-amino-acid chain; its full sequence is Putative thymidine phosphorylase (517 aa).

The protein belongs to the thymidine/pyrimidine-nucleoside phosphorylase family. Type 2 subfamily.

The enzyme catalyses thymidine + phosphate = 2-deoxy-alpha-D-ribose 1-phosphate + thymine. The polypeptide is Putative thymidine phosphorylase (Legionella pneumophila (strain Paris)).